A 119-amino-acid polypeptide reads, in one-letter code: Large ribosomal subunit protein uL22 (119 aa).

Belongs to the universal ribosomal protein uL22 family. As to quaternary structure, part of the 50S ribosomal subunit.

This protein binds specifically to 23S rRNA; its binding is stimulated by other ribosomal proteins, e.g. L4, L17, and L20. It is important during the early stages of 50S assembly. It makes multiple contacts with different domains of the 23S rRNA in the assembled 50S subunit and ribosome. Its function is as follows. The globular domain of the protein is located near the polypeptide exit tunnel on the outside of the subunit, while an extended beta-hairpin is found that lines the wall of the exit tunnel in the center of the 70S ribosome. The chain is Large ribosomal subunit protein uL22 from Tropheryma whipplei (strain TW08/27) (Whipple's bacillus).